The primary structure comprises 544 residues: MDSQRNLLLIALLFVTFMLWQAWETDKNPPATTQAIQQATNAVTGDATNQGVPASGQGKLITVKTDVLSLTINTRGGDVEQAHLLAYPDTLGSDKPFHLLETTSEFVYQAQSGLTGKNGPDNPANGPRPLFTTTQDSFELADGQNELRIPMTYTAADGVTYTKTFVLKRGDYALNVDYSVNNTSAQPLELTLFGQLKQSIDLPKHRDTGSSNFALHTYRGAAFSSSEDKYKKYSFSDMDENLNITTNSGWVAMLQQYFATAWIPTTAGANTFYTNKLGNGQAAIGFKAAPVVVAAGSQQNLNATLWVGPEIQDKMAAVAPHLDLTVDYGWLWFISQPLFKLLKFLHGFIGNWGFSIIAITFIVRGVMYPLTKAQYTSMAKMRLLQPKLQAMRERIGDDKQRMSQEMMALYKSEKVNPLGGCFPLLIQMPIFLALYYMLMGSVELRHAPFALWIHDLSAQDPYYILPILMGVTMFFIQKMSPTTVTDPMQQKIMTYMPVIFTVFFLWFPSGLVMYYIVSNLVTILQQQLIYRGLEKRGLHSREKK.

Residues 6 to 26 (NLLLIALLFVTFMLWQAWETD) traverse the membrane as a helical segment. The tract at residues 112 to 132 (SGLTGKNGPDNPANGPRPLFT) is disordered. The next 4 helical transmembrane spans lie at 343 to 363 (KFLH…TFIV), 418 to 438 (LGGC…YYML), 456 to 476 (LSAQ…MFFI), and 497 to 517 (PVIF…YYIV).

The protein belongs to the OXA1/ALB3/YidC family. Type 1 subfamily. In terms of assembly, interacts with the Sec translocase complex via SecD. Specifically interacts with transmembrane segments of nascent integral membrane proteins during membrane integration.

The protein localises to the cell inner membrane. Functionally, required for the insertion and/or proper folding and/or complex formation of integral membrane proteins into the membrane. Involved in integration of membrane proteins that insert both dependently and independently of the Sec translocase complex, as well as at least some lipoproteins. Aids folding of multispanning membrane proteins. The sequence is that of Membrane protein insertase YidC from Pectobacterium carotovorum subsp. carotovorum (strain PC1).